Here is a 161-residue protein sequence, read N- to C-terminus: Allophycocyanin alpha chain (161 aa).

The residue at position 71 (asparagine 71) is an N4-methylasparagine. Cysteine 81 lines the (2R,3E)-phycocyanobilin pocket.

Belongs to the phycobiliprotein family. Heterodimer of an alpha and a beta chain. In terms of processing, contains one covalently linked phycocyanobilin chromophore.

It localises to the plastid. It is found in the chloroplast thylakoid membrane. Light-harvesting photosynthetic bile pigment-protein from the phycobiliprotein complex. Allophycocyanin has a maximum absorption at approximately 650 nanometers. This is Allophycocyanin alpha chain (apcA) from Aglaothamnion neglectum (Red alga).